A 398-amino-acid chain; its full sequence is tRNA-specific 2-thiouridylase MnmA (398 aa).

ATP is bound by residues 19–26 (AMSGGVDS) and L45. The active-site Nucleophile is C113. C113 and C210 are oxidised to a cystine. G137 serves as a coordination point for ATP. The tract at residues 160–162 (RDQ) is interaction with tRNA. The Cysteine persulfide intermediate role is filled by C210.

This sequence belongs to the MnmA/TRMU family.

It localises to the cytoplasm. The catalysed reaction is S-sulfanyl-L-cysteinyl-[protein] + uridine(34) in tRNA + AH2 + ATP = 2-thiouridine(34) in tRNA + L-cysteinyl-[protein] + A + AMP + diphosphate + H(+). Functionally, catalyzes the 2-thiolation of uridine at the wobble position (U34) of tRNA, leading to the formation of s(2)U34. The chain is tRNA-specific 2-thiouridylase MnmA from Rhodopseudomonas palustris (strain HaA2).